We begin with the raw amino-acid sequence, 311 residues long: Methionyl-tRNA formyltransferase (311 aa).

112-115 contacts (6S)-5,6,7,8-tetrahydrofolate; the sequence is SLLP.

Belongs to the Fmt family.

It catalyses the reaction L-methionyl-tRNA(fMet) + (6R)-10-formyltetrahydrofolate = N-formyl-L-methionyl-tRNA(fMet) + (6S)-5,6,7,8-tetrahydrofolate + H(+). Attaches a formyl group to the free amino group of methionyl-tRNA(fMet). The formyl group appears to play a dual role in the initiator identity of N-formylmethionyl-tRNA by promoting its recognition by IF2 and preventing the misappropriation of this tRNA by the elongation apparatus. The chain is Methionyl-tRNA formyltransferase from Bradyrhizobium sp. (strain BTAi1 / ATCC BAA-1182).